The following is a 262-amino-acid chain: Aminoglycoside (3'') (9) adenylyltransferase (262 aa).

An adenylyltransferase domain region spans residues 1 to 157; sequence MTLSIPPSIQ…ERAERLFTPA (157 aa). Residues serine 36, serine 46, and aspartate 47 each contribute to the ATP site. 3 residues coordinate Mg(2+): aspartate 47, aspartate 49, and glutamate 87. Glutamate 87 (proton acceptor) is an active-site residue. Position 130 (aspartate 130) interacts with ATP. A helical domain region spans residues 158–262; the sequence is PAAQLLKALR…AKAHIPTQFT (105 aa). Residues 173-178 and histidine 185 each bind streptomycin; that span reads WQSTAD. ATP contacts are provided by lysine 205 and tyrosine 231.

In terms of assembly, monomer.

The catalysed reaction is streptomycin + ATP = 3''-O-adenylylstreptomycin + diphosphate. The enzyme catalyses spectinomycin + ATP = 9-O-adenylylspectinomycin + diphosphate. Functionally, mediates bacterial resistance to the antibiotics streptomycin and spectinomycin, does not confer resistance to kanamycin. Binds ATP first, then antibiotic. The sequence is that of Aminoglycoside (3'') (9) adenylyltransferase (aadA) from Salmonella typhimurium (strain LT2 / SGSC1412 / ATCC 700720).